The sequence spans 331 residues: MSSDTLHKYEALPEDHRNVALRPCLIEEFVGQTEVIKNLKVFIQSAYERREPMDHVLLYGPPGLGKTTLAHIIAKELKVNFRSTAGPLLSKAGDLAAILTNLQPMDVLFIDEIHRLNRNIEEVLYSAMEDYCLDIVVGEGCGARTLKIDIPAFTLIGATTRFGLISNPLRDRFGIPLHLEFYSVDELVLVIKRAAGVICTSIDDSGAREIASRSRGTPRIALRLFRRVRDFLEFERKHGTIDGNFANSALFRLGIDGAGFDKMDLKYLKFVFEAKGPVGIDTIASALSEDVGNIEETIEPYLIKTCFIQRTPRGRVLTQKGFEYLLSSKYI.

The tract at residues 1–182 is large ATPase domain (RuvB-L); sequence MSSDTLHKYE…FGIPLHLEFY (182 aa). ATP-binding positions include leucine 21, arginine 22, glycine 63, lysine 66, threonine 67, threonine 68, 129–131, arginine 172, tyrosine 182, and arginine 219; that span reads EDY. Position 67 (threonine 67) interacts with Mg(2+). The interval 183 to 254 is small ATPAse domain (RuvB-S); sequence SVDELVLVIK…FANSALFRLG (72 aa). The tract at residues 257-331 is head domain (RuvB-H); that stretch reads GAGFDKMDLK…FEYLLSSKYI (75 aa). DNA-binding residues include arginine 310 and arginine 315.

Belongs to the RuvB family. As to quaternary structure, homohexamer. Forms an RuvA(8)-RuvB(12)-Holliday junction (HJ) complex. HJ DNA is sandwiched between 2 RuvA tetramers; dsDNA enters through RuvA and exits via RuvB. An RuvB hexamer assembles on each DNA strand where it exits the tetramer. Each RuvB hexamer is contacted by two RuvA subunits (via domain III) on 2 adjacent RuvB subunits; this complex drives branch migration. In the full resolvosome a probable DNA-RuvA(4)-RuvB(12)-RuvC(2) complex forms which resolves the HJ.

The protein localises to the cytoplasm. The catalysed reaction is ATP + H2O = ADP + phosphate + H(+). Its function is as follows. The RuvA-RuvB-RuvC complex processes Holliday junction (HJ) DNA during genetic recombination and DNA repair, while the RuvA-RuvB complex plays an important role in the rescue of blocked DNA replication forks via replication fork reversal (RFR). RuvA specifically binds to HJ cruciform DNA, conferring on it an open structure. The RuvB hexamer acts as an ATP-dependent pump, pulling dsDNA into and through the RuvAB complex. RuvB forms 2 homohexamers on either side of HJ DNA bound by 1 or 2 RuvA tetramers; 4 subunits per hexamer contact DNA at a time. Coordinated motions by a converter formed by DNA-disengaged RuvB subunits stimulates ATP hydrolysis and nucleotide exchange. Immobilization of the converter enables RuvB to convert the ATP-contained energy into a lever motion, pulling 2 nucleotides of DNA out of the RuvA tetramer per ATP hydrolyzed, thus driving DNA branch migration. The RuvB motors rotate together with the DNA substrate, which together with the progressing nucleotide cycle form the mechanistic basis for DNA recombination by continuous HJ branch migration. Branch migration allows RuvC to scan DNA until it finds its consensus sequence, where it cleaves and resolves cruciform DNA. In Anaplasma marginale (strain St. Maries), this protein is Holliday junction branch migration complex subunit RuvB.